The primary structure comprises 200 residues: Rho-related protein racH (200 aa).

11–18 contacts GTP; it reads GDMSVGKT. An Effector region motif is present at residues 33–41; it reads YVPTVFDNY. Residues 58 to 62 and 117 to 120 each bind GTP; these read DTAGS and TKLD. A disordered region spans residues 178 to 200; sequence EELAKSKKDSKKGDKDSKDCIIQ. Residue Cys197 is modified to Cysteine methyl ester. A lipid anchor (S-geranylgeranyl cysteine) is attached at Cys197. The propeptide at 198–200 is removed in mature form; the sequence is IIQ.

It belongs to the small GTPase superfamily. Rho family.

Its subcellular location is the cell membrane. In Dictyostelium discoideum (Social amoeba), this protein is Rho-related protein racH (racH).